Reading from the N-terminus, the 380-residue chain is Flagellar P-ring protein (380 aa).

The first 35 residues, 1 to 35 (MRFFTQSPFPLRTLTRRLTAFVCVGLLLLPGFTLA), serve as a signal peptide directing secretion.

It belongs to the FlgI family. In terms of assembly, the basal body constitutes a major portion of the flagellar organelle and consists of four rings (L,P,S, and M) mounted on a central rod.

It is found in the periplasm. Its subcellular location is the bacterial flagellum basal body. In terms of biological role, assembles around the rod to form the L-ring and probably protects the motor/basal body from shearing forces during rotation. This is Flagellar P-ring protein from Gluconobacter oxydans (strain 621H) (Gluconobacter suboxydans).